The primary structure comprises 227 residues: 7-cyano-7-deazaguanine synthase (227 aa).

An ATP-binding site is contributed by 8–18 (VSGGADSATVL). Zn(2+) is bound by residues C192, C202, C205, and C208.

This sequence belongs to the QueC family. Requires Zn(2+) as cofactor.

The catalysed reaction is 7-carboxy-7-deazaguanine + NH4(+) + ATP = 7-cyano-7-deazaguanine + ADP + phosphate + H2O + H(+). Its pathway is purine metabolism; 7-cyano-7-deazaguanine biosynthesis. Functionally, catalyzes the ATP-dependent conversion of 7-carboxy-7-deazaguanine (CDG) to 7-cyano-7-deazaguanine (preQ(0)). This is 7-cyano-7-deazaguanine synthase from Rickettsia canadensis (strain McKiel).